The primary structure comprises 430 residues: Putrescine 2-hydroxylase (430 aa).

Residues 88–203 (LYVGHQKLVP…LRDCHGLLFE (116 aa)) enclose the Rieske domain. 4 residues coordinate [2Fe-2S] cluster: C128, H130, C162, and H165.

It belongs to the bacterial ring-hydroxylating dioxygenase alpha subunit family. It depends on [2Fe-2S] cluster as a cofactor.

In terms of biological role, rieske-type iron sulfur protein that can catalyze in vitro the 2-hydroxylation of putrescine, forming 2-hydroxyputrescine. May be involved in the biosynthesis of the cyclic hydroxamate siderophore alcaligin. The polypeptide is Putrescine 2-hydroxylase (Bordetella bronchiseptica (strain ATCC BAA-588 / NCTC 13252 / RB50) (Alcaligenes bronchisepticus)).